Consider the following 176-residue polypeptide: NAD(P)H-quinone oxidoreductase subunit 6, chloroplastic (176 aa).

Helical transmembrane passes span 10-30 (ILLV…VLLT), 32-52 (PISS…FYIP), 61-81 (AQLL…VMFM), 92-112 (LWTI…FSLI), and 152-172 (FYLP…GAIA).

This sequence belongs to the complex I subunit 6 family. As to quaternary structure, NDH is composed of at least 16 different subunits, 5 of which are encoded in the nucleus.

It localises to the plastid. Its subcellular location is the chloroplast thylakoid membrane. The enzyme catalyses a plastoquinone + NADH + (n+1) H(+)(in) = a plastoquinol + NAD(+) + n H(+)(out). It catalyses the reaction a plastoquinone + NADPH + (n+1) H(+)(in) = a plastoquinol + NADP(+) + n H(+)(out). In terms of biological role, NDH shuttles electrons from NAD(P)H:plastoquinone, via FMN and iron-sulfur (Fe-S) centers, to quinones in the photosynthetic chain and possibly in a chloroplast respiratory chain. The immediate electron acceptor for the enzyme in this species is believed to be plastoquinone. Couples the redox reaction to proton translocation, and thus conserves the redox energy in a proton gradient. This chain is NAD(P)H-quinone oxidoreductase subunit 6, chloroplastic (ndhG), found in Chloranthus spicatus (Chulantree).